Reading from the N-terminus, the 68-residue chain is Large ribosomal subunit protein uL29 (68 aa).

This sequence belongs to the universal ribosomal protein uL29 family.

The chain is Large ribosomal subunit protein uL29 (rpl29) from Archaeoglobus fulgidus (strain ATCC 49558 / DSM 4304 / JCM 9628 / NBRC 100126 / VC-16).